A 162-amino-acid polypeptide reads, in one-letter code: MRISKPHLRITSIQCYVCLLLNTHFLTEAGIRVFILGCISAGIPKTEANWEDVRKDLQKIENLIQSLHMDATLYTESDVHPRCKVTAMNCFLLELEVISHESRDGDIEETVKNLILLANSSLSSNGNITESGCKVCEELEEKNITEFLESFKHIVQMFINPP.

The N-terminal stretch at 1–29 is a signal peptide; sequence MRISKPHLRITSIQCYVCLLLNTHFLTEA. The propeptide occupies 30-48; that stretch reads GIRVFILGCISAGIPKTEA. Cystine bridges form between Cys-83-Cys-133 and Cys-90-Cys-136. N-linked (GlcNAc...) asparagine glycosylation is found at Asn-119, Asn-127, and Asn-143.

The protein belongs to the IL-15/IL-21 family.

The protein localises to the secreted. Its function is as follows. Cytokine that plays a major role in the development of inflammatory and protective immune responses to microbial invaders and parasites by modulating immune cells of both the innate and adaptive immune systems. Stimulates the proliferation of natural killer cells, T-cells and B-cells and promotes the secretion of several cytokines. In monocytes, induces the production of IL8 and monocyte chemotactic protein 1/CCL2, two chemokines that attract neutrophils and monocytes respectively to sites of infection. Unlike most cytokines, which are secreted in soluble form, IL15 is expressed in association with its high affinity IL15RA on the surface of IL15-producing cells and delivers signals to target cells that express IL2RB and IL2RG receptor subunits. Binding to its receptor triggers the phosphorylation of JAK1 and JAK3 and the recruitment and subsequent phosphorylation of signal transducer and activator of transcription-3/STAT3 and STAT5. In mast cells, induces the rapid tyrosine phosphorylation of STAT6 and thereby controls mast cell survival and release of cytokines such as IL4. The protein is Interleukin-15 (IL15) of Marmota monax (Woodchuck).